The primary structure comprises 79 residues: Acyl carrier protein (79 aa).

A Carrier domain is found at 2–77 (SDIEARVKKI…NAIDYANTHQ (76 aa)). Ser-37 bears the O-(pantetheine 4'-phosphoryl)serine mark.

It belongs to the acyl carrier protein (ACP) family. Post-translationally, 4'-phosphopantetheine is transferred from CoA to a specific serine of apo-ACP by AcpS. This modification is essential for activity because fatty acids are bound in thioester linkage to the sulfhydryl of the prosthetic group.

It localises to the cytoplasm. It functions in the pathway lipid metabolism; fatty acid biosynthesis. Its function is as follows. Carrier of the growing fatty acid chain in fatty acid biosynthesis. This chain is Acyl carrier protein, found in Paracidovorax citrulli (strain AAC00-1) (Acidovorax citrulli).